The following is a 26-amino-acid chain: L-amino-acid oxidase (26 aa).

This sequence belongs to the flavin monoamine oxidase family. As to quaternary structure, monomer. FAD is required as a cofactor. Not glycosylated. As to expression, expressed by the ink gland.

It is found in the secreted. It carries out the reaction an L-alpha-amino acid + O2 + H2O = a 2-oxocarboxylate + H2O2 + NH4(+). Its function is as follows. Catalyzes the oxidative deamination of positively charged L-amino acids L-Lys and L-Arg but not of amino acids L-His, L-Asp or L-Glu. Has antibacterial activity against the Gram-positive bacterium S.aureus (MIC=15 ug/ml). This antibacterial activity is bacteriostatic in the absence of amino acids L-Lys or L-Arg but bactericidal in their presence. The antibacterial effect is largely dependent on H(2)O(2) produced in the oxidative deamination of substrates. Has hemagglutinating activity towards rabbit erythrocytes. Hemagglutinating activity is inhibited by the glycoprotein fetuin, but not by glucose, mannose, galactose, N-acetylglucosamine, N-acetylgalactosamine or sialic acid. In Aplysia dactylomela (Spotted sea hare), this protein is L-amino-acid oxidase.